Reading from the N-terminus, the 143-residue chain is MEALVLLGHGSRLPYSKEIVGKVAEKIKEKNIYDIVEIGMMEFNEPTIPQTINKVIAEGAKKIIIVPVFLAHGNHTKRDIPQILGLIECEEHHHEGEGGHHHHHHHHHGEKIEVPEGVEIIYRDPMGADDRVVDIVLDRAKGN.

The active-site Proton acceptor is the H9. H9 contributes to the Co(2+) binding site. A Ni(2+)-binding site is contributed by H9. Substrate-binding positions include E45 and 70 to 75 (LAHGNH). H75 is a binding site for Co(2+). Residue H75 coordinates Ni(2+).

The protein belongs to the CbiX family. CbiXS subfamily. Homotetramer; dimer of dimers.

The enzyme catalyses Co-sirohydrochlorin + 2 H(+) = sirohydrochlorin + Co(2+). The catalysed reaction is Ni-sirohydrochlorin + 2 H(+) = sirohydrochlorin + Ni(2+). The protein operates within cofactor biosynthesis; adenosylcobalamin biosynthesis; cob(II)yrinate a,c-diamide from sirohydrochlorin (anaerobic route): step 1/10. In terms of biological role, catalyzes the insertion of Co(2+) into sirohydrochlorin as part of the anaerobic pathway to cobalamin biosynthesis. Involved in the biosynthesis of the unique nickel-containing tetrapyrrole coenzyme F430, the prosthetic group of methyl-coenzyme M reductase (MCR), which plays a key role in methanogenesis and anaerobic methane oxidation. Catalyzes the insertion of Ni(2+) into sirohydrochlorin to yield Ni-sirohydrochlorin. The chain is Sirohydrochlorin cobaltochelatase from Methanococcus aeolicus (strain ATCC BAA-1280 / DSM 17508 / OCM 812 / Nankai-3).